The primary structure comprises 593 residues: Eukaryotic peptide chain release factor subunit 1 (593 aa).

It belongs to the eukaryotic release factor 1 family. Heterodimer of two subunits, one of which binds GTP.

The protein localises to the cytoplasm. Directs the termination of nascent peptide synthesis (translation) in response to the termination codons UAA, UAG and UGA. The polypeptide is Eukaryotic peptide chain release factor subunit 1 (Caenorhabditis elegans).